Consider the following 277-residue polypeptide: Hydroxypyruvate/pyruvate aldolase (277 aa).

H54 (proton acceptor) is an active-site residue. Residues E158 and D184 each contribute to the a divalent metal cation site.

It belongs to the HpcH/HpaI aldolase family. A divalent metal cation is required as a cofactor.

The enzyme catalyses D-glyceraldehyde + 3-hydroxypyruvate = (3R,4S,5R)-3,4,5,6-tetrahydroxy-2-oxohexanoate. It carries out the reaction D-glyceraldehyde + 3-hydroxypyruvate = 2-dehydro-D-gluconate. It catalyses the reaction D-glyceraldehyde + 3-hydroxypyruvate = 2-dehydro-D-galactonate. The catalysed reaction is D-glyceraldehyde + pyruvate = 2-dehydro-3-deoxy-L-galactonate. Aldolase which can catalyze in vitro the aldolisation reaction between hydroxypyruvate (HPA) or pyruvate (PA) and D-glyceraldehyde (D-GA). The condensation of hydroxypyruvate and D-glyceraldehyde produces (3R,4S,5R)-3,4,5,6-tetrahydroxy-2-oxohexanoate as the major product, 2-dehydro-D-gluconate and 2-dehydro-D-galactonate. The condensation of pyruvate and D-glyceraldehyde produces 2-dehydro-3-deoxy-L-galactonate as the major product. The protein is Hydroxypyruvate/pyruvate aldolase of Deinococcus radiodurans (strain ATCC 13939 / DSM 20539 / JCM 16871 / CCUG 27074 / LMG 4051 / NBRC 15346 / NCIMB 9279 / VKM B-1422 / R1).